The chain runs to 98 residues: Class II hydrophobin 3 (98 aa).

The signal sequence occupies residues 1–18; sequence MQFTTTTLIAILSALAVA. N-linked (GlcNAc...) asparagine glycans are attached at residues N26 and N54. 4 disulfides stabilise this stretch: C35–C83, C44–C74, C45–C57, and C84–C95.

This sequence belongs to the cerato-ulmin hydrophobin family.

The protein resides in the secreted. The protein localises to the cell wall. In terms of biological role, aerial growth, conidiation, and dispersal of filamentous fungi in the environment rely upon a capability of their secreting small amphipathic proteins called hydrophobins (HPBs) with low sequence identity. Class I can self-assemble into an outermost layer of rodlet bundles on aerial cell surfaces, conferring cellular hydrophobicity that supports fungal growth, development and dispersal; whereas Class II form highly ordered films at water-air interfaces through intermolecular interactions but contribute nothing to the rodlet structure. In Botryotinia fuckeliana, hydrophobins are not involved in conferring surface hydrophobicity to conidia and aerial hyphae and their function in sclerotia and fruiting bodies remains to be investigated. The protein is Class II hydrophobin 3 of Botryotinia fuckeliana (strain B05.10) (Noble rot fungus).